We begin with the raw amino-acid sequence, 495 residues long: WD repeat-containing protein 37 (495 aa).

Polar residues-rich tracts occupy residues 1–13 and 22–31; these read MPTE…TARQ and SLSIRRTNSS. Residues 1 to 50 form a disordered region; the sequence is MPTESASCSTARQTKQKRKSHSLSIRRTNSSEQERTGLPRDMLEGQDSKL. A compositionally biased stretch (basic and acidic residues) spans 32-47; sequence EQERTGLPRDMLEGQD. WD repeat units follow at residues 154–194 and 197–236; these read GHRD…CLVK and GHVG…PTPQ. The tract at residues 237–266 is disordered; the sequence is PVADTSQISGEDEVECSDKDEPDLDGDVSS. Positions 246–264 are enriched in acidic residues; it reads GEDEVECSDKDEPDLDGDV. WD repeat units follow at residues 280 to 319, 322 to 361, 366 to 404, 407 to 446, and 453 to 494; these read SHQG…LVHS, GHDQ…IHSV, GHTD…SPIA, RTDS…LARL, and GHRR…LLQE.

As to quaternary structure, forms homodimers. Interacts with PACS1. Interacts with PACS2.

The protein localises to the cytoplasm. The protein resides in the nucleus. Functionally, required for normal ER Ca2+ handling in lymphocytes. Together with PACS1, it plays an essential role in stabilizing peripheral lymphocyte populations. In Pongo abelii (Sumatran orangutan), this protein is WD repeat-containing protein 37 (WDR37).